A 448-amino-acid chain; its full sequence is Probable glycine dehydrogenase (decarboxylating) subunit 1 (448 aa).

The protein belongs to the GcvP family. N-terminal subunit subfamily. As to quaternary structure, the glycine cleavage system is composed of four proteins: P, T, L and H. In this organism, the P 'protein' is a heterodimer of two subunits.

The enzyme catalyses N(6)-[(R)-lipoyl]-L-lysyl-[glycine-cleavage complex H protein] + glycine + H(+) = N(6)-[(R)-S(8)-aminomethyldihydrolipoyl]-L-lysyl-[glycine-cleavage complex H protein] + CO2. In terms of biological role, the glycine cleavage system catalyzes the degradation of glycine. The P protein binds the alpha-amino group of glycine through its pyridoxal phosphate cofactor; CO(2) is released and the remaining methylamine moiety is then transferred to the lipoamide cofactor of the H protein. The polypeptide is Probable glycine dehydrogenase (decarboxylating) subunit 1 (Thermomicrobium roseum (strain ATCC 27502 / DSM 5159 / P-2)).